A 142-amino-acid chain; its full sequence is Large ribosomal subunit protein uL13 (142 aa).

Belongs to the universal ribosomal protein uL13 family. Part of the 50S ribosomal subunit.

Its function is as follows. This protein is one of the early assembly proteins of the 50S ribosomal subunit, although it is not seen to bind rRNA by itself. It is important during the early stages of 50S assembly. The polypeptide is Large ribosomal subunit protein uL13 (Chromobacterium violaceum (strain ATCC 12472 / DSM 30191 / JCM 1249 / CCUG 213 / NBRC 12614 / NCIMB 9131 / NCTC 9757 / MK)).